Reading from the N-terminus, the 795-residue chain is Protocadherin beta-4 (795 aa).

An N-terminal signal peptide occupies residues 1–27; the sequence is MKKLGRIHPNRQVLAFILMVFLSQVRL. The Extracellular portion of the chain corresponds to 28-689; the sequence is EPIRYSVLEE…AQADSLTVYL (662 aa). Cadherin domains are found at residues 34–132, 137–241, 246–346, 351–450, and 455–560; these read VLEE…SPIF, VLLK…APEF, YGVQ…PPEL, LTSS…APAF, and YTLF…SPFV. An N-linked (GlcNAc...) asparagine glycan is attached at asparagine 183. N-linked (GlcNAc...) asparagine glycans are attached at residues asparagine 417 and asparagine 435. A glycan (N-linked (GlcNAc...) asparagine) is linked at asparagine 566. Residues 567–670 enclose the Cadherin 6 domain; sequence GSAPCTELVP…LVDGFSQPYL (104 aa). Residues 690 to 710 form a helical membrane-spanning segment; that stretch reads VVALASVSSLFLFSVLLFVAV. The Cytoplasmic portion of the chain corresponds to 711–795; that stretch reads RLCRRSRAAS…PKFRNSLVFS (85 aa).

Its subcellular location is the cell membrane. Potential calcium-dependent cell-adhesion protein. May be involved in the establishment and maintenance of specific neuronal connections in the brain. This is Protocadherin beta-4 (PCDHB4) from Homo sapiens (Human).